A 336-amino-acid polypeptide reads, in one-letter code: Potassium channel subfamily K member 1 (336 aa).

Residues 1–20 (MLQSLAGSSCVRLVERHRSA) lie on the Cytoplasmic side of the membrane. The chain crosses the membrane as a helical span at residues 21–41 (WCFGFLVLGYLLYLVFGAVVF). The Extracellular portion of the chain corresponds to 42 to 103 (SSVELPYEDL…SNASGNWNWD (62 aa)). N-linked (GlcNAc...) asparagine glycosylation is present at N95. Residues 104 to 116 (FTSALFFASTVLS) constitute an intramembrane region (helical). Residues 117–122 (TTGYGH) lie within the membrane without spanning it. A selectivity filter 1 region spans residues 117–122 (TTGYGH). Residues 123–132 (TVPLSDGGKA) lie on the Extracellular side of the membrane. A helical transmembrane segment spans residues 133–156 (FCIIYSVIGIPFTLLFLTAVVQRV). At 157–181 (TVHVTRRPVLYFHIRWGFSKQVVAI) the chain is on the cytoplasmic side. Residues 182–202 (VHAVLLGFVTVSCFFFIPAAV) traverse the membrane as a helical segment. At 203 to 211 (FSVLEDDWN) the chain is on the extracellular side. Positions 212 to 224 (FLESFYFCFISLS) form an intramembrane region, helical. The tract at residues 225–230 (TIGLGD) is selectivity filter 2. Residues 225-231 (TIGLGDY) lie within the membrane without spanning it. Over 232-243 (VPGEGYNQKFRE) the chain is Extracellular. The chain crosses the membrane as a helical span at residues 244 to 267 (LYKIGITCYLLLGLIAMLVVLETF). Residues 268 to 336 (CELHELKKFR…PPYEDGSANH (69 aa)) are Cytoplasmic-facing. Residue K274 forms a Glycyl lysine isopeptide (Lys-Gly) (interchain with G-Cter in SUMO) linkage. An important for intracellular retention in recycling endosomes region spans residues 293-299 (IMEHDQL). The tract at residues 310-336 (GLKEEQKQNEPFVASQSPPYEDGSANH) is disordered. S326 bears the Phosphoserine mark.

The protein belongs to the two pore domain potassium channel (TC 1.A.1.8) family. As to quaternary structure, homodimer; disulfide-linked. Heterodimer with KCNK2; disulfide-linked. In astrocytes, forms mostly heterodimeric potassium channels with KCNK2, with only a minor proportion of functional channels containing homodimeric KCNK1. Interacts with KCNK3 and KCNK9, forming functional heterodimeric channels. Interacts with GNG4. Identified in a complex with PSD and ARF6; interacts only with PSD that is bound to ARF6. Interacts with UBE2I. Post-translationally, sumoylation is controversial. Sumoylated by UBE2I. Not sumoylated when expressed in xenopus oocytes or mammalian cells. Sumoylation inactivates the channel, but does not interfere with expression at the cell membrane. Sumoylation of a single subunit is sufficient to silence the dimeric channel. Sumoylation of KCNK1 is sufficient to silence heterodimeric channels formed by KCNK1 and KCNK3 or KCNK9. Desumoylated by SENP1; this activates the channel. Desumoylated by SENP1; this strongly increases halothane-mediated activation of heterodimeric channels formed with KCNK9. SENP1 treatment has no effect. As to expression, detected in brain and in kidney cortex and medulla, especially at the renal brush border membranes of the proximal convoluted tubules, in distal tubules and on intercalated cells of the collecting duct. Detected in cerebellum granule neurons. Detected in astrocytes in hippocampus stratum radiatum. Highly expressed in the stria vascularis in the cochlea. Detected in neurons in Scarpa's ganglion in the inner ear, at nerve terminals in the crista ampullaris, in supporting cells and dark cells, but not in hair cells (at protein level). Detected in the brain cerebellar granule cell layer, amygdala, thalamus reticular nucleus, habenula, mesencephalic trigeminal neurons, neocortex and piriform cortex, and at lower levels in the olfactory bulb. Detected in Scarpa's ganglia and crista ampullaris in the inner ear.

Its subcellular location is the cell membrane. The protein localises to the recycling endosome. The protein resides in the apical cell membrane. It localises to the cytoplasmic vesicle. It is found in the perikaryon. Its subcellular location is the cell projection. The protein localises to the dendrite. The protein resides in the synaptic cell membrane. The catalysed reaction is K(+)(in) = K(+)(out). The enzyme catalyses NH4(+)(in) = NH4(+)(out). It catalyses the reaction Na(+)(in) = Na(+)(out). It carries out the reaction Rb(+)(in) = Rb(+)(out). The catalysed reaction is Cs(+)(in) = Cs(+)(out). The enzyme catalyses Li(+)(in) = Li(+)(out). It catalyses the reaction L-glutamate(out) = L-glutamate(in). It carries out the reaction chloride(in) = chloride(out). With respect to regulation, inhibited by 100 uM quinine. Slightly inhibited by Ba(+). Activity is first increased and then decreased when the extracellular pH is lowered to 6.0. Functionally, ion channel that contributes to passive transmembrane potassium transport and to the regulation of the resting membrane potential in brain astrocytes, but also in kidney and in other tissues. Forms dimeric channels through which potassium ions pass in accordance with their electrochemical gradient. The channel is selective for K(+) ions at physiological potassium concentrations and at neutral pH, but becomes permeable to Na(+) at subphysiological K(+) levels and upon acidification of the extracellular medium. The homodimer has very low potassium channel activity, when expressed in heterologous systems, and can function as weakly inward rectifying potassium channel. Channel activity is modulated by activation of serotonin receptors. Heterodimeric channels containing KCNK1 and KCNK2 have much higher activity, and may represent the predominant form in astrocytes. Heterodimeric channels containing KCNK1 and KCNK3 or KCNK9 have much higher activity. Heterodimeric channels formed by KCNK1 and KCNK9 may contribute to halothane-sensitive currents. Mediates outward rectifying potassium currents in dentate gyrus granule cells and contributes to the regulation of their resting membrane potential. Contributes to the regulation of action potential firing in dentate gyrus granule cells and down-regulates their intrinsic excitability. Contributes to the regulation of the resting membrane potential of pancreatic beta cells. In astrocytes, the heterodimer formed by KCNK1 and KCNK2 is required for rapid glutamate release in response to activation of G-protein coupled receptors, such as F2R and CNR1. Required for normal ion and water transport in the kidney. The low channel activity of homodimeric KCNK1 may be due to sumoylation. The low channel activity may be due to rapid internalization from the cell membrane and retention in recycling endosomes. Permeable to monovalent cations with ion selectivity for K(+) &gt; Rb(+) &gt;&gt; NH4(+) &gt;&gt; Cs(+) = Na(+) = Li(+). The sequence is that of Potassium channel subfamily K member 1 from Rattus norvegicus (Rat).